We begin with the raw amino-acid sequence, 79 residues long: MAAPTMKERQACWGARDEYWKCLDENTEDASKCKKLRSSFESSCPQQWIKYFDKRRDYLKFKEKFEAGDFQPSKMTAKS.

One can recognise a CHCH domain in the interval 9-52 (RQACWGARDEYWKCLDENTEDASKCKKLRSSFESSCPQQWIKYF). A Cx9C motif motif is present at residues 12–22 (CWGARDEYWKC). 2 cysteine pairs are disulfide-bonded: Cys12-Cys44 and Cys22-Cys33. A Cx10C motif motif is present at residues 33 to 44 (CKKLRSSFESSC).

Belongs to the cytochrome c oxidase subunit 6B family. Found in a complex with TMEM177, COX20, MT-CO2/COX2, COX18, SCO1 and SCO2. Interacts with COA1, MT-CO2/COX2, SCO1, SCO2 and COX20. Interacts with COX20 in a MT-CO2/COX2- and COX18-dependent manner. Interacts with COX16.

It localises to the mitochondrion intermembrane space. In terms of biological role, involved in the maturation of the mitochondrial respiratory chain complex IV subunit MT-CO2/COX2. Thereby, may regulate early steps of complex IV assembly. Mitochondrial respiratory chain complex IV or cytochrome c oxidase is the component of the respiratory chain that catalyzes the transfer of electrons from intermembrane space cytochrome c to molecular oxygen in the matrix and as a consequence contributes to the proton gradient involved in mitochondrial ATP synthesis. May also be required for efficient formation of respiratory supercomplexes comprised of complexes III and IV. This is Cytochrome c oxidase assembly factor 6 homolog (COA6) from Bos taurus (Bovine).